Consider the following 179-residue polypeptide: Large ribosomal subunit protein uL5 (179 aa).

It belongs to the universal ribosomal protein uL5 family. As to quaternary structure, part of the 50S ribosomal subunit; part of the 5S rRNA/L5/L18/L25 subcomplex. Contacts the 5S rRNA and the P site tRNA. Forms a bridge to the 30S subunit in the 70S ribosome.

Its function is as follows. This is one of the proteins that bind and probably mediate the attachment of the 5S RNA into the large ribosomal subunit, where it forms part of the central protuberance. In the 70S ribosome it contacts protein S13 of the 30S subunit (bridge B1b), connecting the 2 subunits; this bridge is implicated in subunit movement. Contacts the P site tRNA; the 5S rRNA and some of its associated proteins might help stabilize positioning of ribosome-bound tRNAs. The chain is Large ribosomal subunit protein uL5 from Dictyoglomus turgidum (strain DSM 6724 / Z-1310).